Here is a 520-residue protein sequence, read N- to C-terminus: MAYERFGIILQSEQYDEDIGNTKVNQKMNEGNHYDLHRKNAFDRIIHSESKKGDNVINYNIHENDKIKAADNIFSSKLKMNPNMSYEMNINCFKNIGYGENQETSKVLTNSLSNNDINTEESGVVDKNSPFLTLGTTILNSNGKSRRWEQKLVHIKTMEGEFSVTMWASGISDDEYSGSDQIVGASDLLKGKEEFGIDGFTSQQNKEYQKMESKFTNAQTLEMPHPISSVQIMDHLIKERGNLSQENNISERILSKTTLSFEEPILLPDSSSIELVNETAAMTINNHRTLSNHTGNTGDLHALPSSVPFRIGLHEGQVNDCLSTISQSTHQDNTDSTGCGEMNLSEVTVSYTNDKKIACPHKGCNKHFRDSSAMRKHLHTHGPRVHVCAECGKAFVESSKLKRHQLVHTGEKPFQCTFEGCGKRFSLDFNLRTHVRIHTGDRPFVCPFDACNKKFAQSTNLKSHILTHAKAKRNTSISGKSGCSNAESNSQSEDTSANYVKVELQDSVTENHVPFVVYAD.

4 consecutive C2H2-type zinc fingers follow at residues 357-381 (IACPHKGCNKHFRDSSAMRKHLHTH), 386-408 (HVCAECGKAFVESSKLKRHQLVH), 414-438 (FQCTFEGCGKRFSLDFNLRTHVRIH), and 444-468 (FVCPFDACNKKFAQSTNLKSHILTH). A disordered region spans residues 475 to 497 (TSISGKSGCSNAESNSQSEDTSA).

In terms of assembly, component of the Esc/E(z) complex, composed of Esc, E(z), Su(z)12, HDAC1/Rpd3 and Caf1-55. This complex is distinct from the PRC1 complex, which contains many other PcG proteins like Pc, Ph, Psc, Su(z)2. The two complexes however cooperate and interact together during the first 3 hours of development to establish PcG silencing. Component of the chromatin remodeling Ino80 complex. Interacts with Sfmbt to form a pho-repressive complex (PhoRC).

It is found in the nucleus. In terms of biological role, polycomb group (PcG) protein that binds to the 5'-CNGCCATNNNNG-3' sequence found in the regulatory regions of many genes. PcG proteins act by forming multiprotein complexes, which are required to maintain the transcriptionally repressive state of homeotic genes throughout development. PcG proteins are not required to initiate repression, but to maintain it during later stages of development. They probably act via the methylation of histones, rendering chromatin heritably changed in its expressibility. Probably targets the Esc/E(z) complex to DNA. Necessary but not sufficient to recruit a functional PcG repressive complex that represses target genes, suggesting that the recruitment of the distinct PRC1 complex is also required to allow a subsequent repression. Functionally, proposed core component of the chromatin remodeling Ino80 complex which is involved in transcriptional regulation, DNA replication and probably DNA repair. This chain is Polycomb protein PHO (pho), found in Drosophila melanogaster (Fruit fly).